The sequence spans 477 residues: Glycogen synthase (477 aa).

K15 contacts ADP-alpha-D-glucose.

The protein belongs to the glycosyltransferase 1 family. Bacterial/plant glycogen synthase subfamily.

It carries out the reaction [(1-&gt;4)-alpha-D-glucosyl](n) + ADP-alpha-D-glucose = [(1-&gt;4)-alpha-D-glucosyl](n+1) + ADP + H(+). It participates in glycan biosynthesis; glycogen biosynthesis. Synthesizes alpha-1,4-glucan chains using ADP-glucose. This is Glycogen synthase from Halorhodospira halophila (strain DSM 244 / SL1) (Ectothiorhodospira halophila (strain DSM 244 / SL1)).